The following is a 410-amino-acid chain: Protein TIC 214 (410 aa).

The next 6 helical transmembrane spans lie at 22–42 (FVFGLICGSLLGTSMNVGSFI), 61–81 (GSAISETFFLFLILFGYIGVI), 87–107 (LEPSLTFIITVFCADTIIGFL), 131–151 (AVIVFGNPGSTWGATSLITSI), 161–181 (LFLFGVFLGIFVIGCGIGFLI), and 210–230 (LALCILILSTIYYHWQVYIGL).

Belongs to the TIC214 family. Part of the Tic complex.

It localises to the plastid. The protein localises to the chloroplast inner membrane. Its function is as follows. Involved in protein precursor import into chloroplasts. May be part of an intermediate translocation complex acting as a protein-conducting channel at the inner envelope. This chain is Protein TIC 214, found in Mesostigma viride (Green alga).